The chain runs to 339 residues: Lipoate--protein ligase (339 aa).

A BPL/LPL catalytic domain is found at F31–Q221. ATP-binding positions include R73, G78–Y81, K135, and A139. (R)-lipoate is bound at residue K135.

Belongs to the LplA family.

It carries out the reaction L-lysyl-[lipoyl-carrier protein] + (R)-lipoate + ATP = N(6)-[(R)-lipoyl]-L-lysyl-[lipoyl-carrier protein] + AMP + diphosphate + H(+). It participates in protein modification; protein lipoylation via exogenous pathway; protein N(6)-(lipoyl)lysine from lipoate: step 1/2. It functions in the pathway protein modification; protein lipoylation via exogenous pathway; protein N(6)-(lipoyl)lysine from lipoate: step 2/2. In terms of biological role, catalyzes specifically the lipoylation of GcvH-L (SpyM50867), likely via the ATP-dependent activation of lipoate to lipoyl-AMP and the transfer of the activated lipoyl onto the lipoyl domain of the target protein. This chain is Lipoate--protein ligase, found in Streptococcus pyogenes serotype M5 (strain Manfredo).